The primary structure comprises 414 residues: Serine hydroxymethyltransferase (414 aa).

Residues L116 and 120–122 contribute to the (6S)-5,6,7,8-tetrahydrofolate site; that span reads GHL. K225 is subject to N6-(pyridoxal phosphate)lysine. 349–351 lines the (6S)-5,6,7,8-tetrahydrofolate pocket; that stretch reads SPF.

This sequence belongs to the SHMT family. Homodimer. It depends on pyridoxal 5'-phosphate as a cofactor.

The protein resides in the cytoplasm. The catalysed reaction is (6R)-5,10-methylene-5,6,7,8-tetrahydrofolate + glycine + H2O = (6S)-5,6,7,8-tetrahydrofolate + L-serine. Its pathway is one-carbon metabolism; tetrahydrofolate interconversion. The protein operates within amino-acid biosynthesis; glycine biosynthesis; glycine from L-serine: step 1/1. In terms of biological role, catalyzes the reversible interconversion of serine and glycine with tetrahydrofolate (THF) serving as the one-carbon carrier. This reaction serves as the major source of one-carbon groups required for the biosynthesis of purines, thymidylate, methionine, and other important biomolecules. Also exhibits THF-independent aldolase activity toward beta-hydroxyamino acids, producing glycine and aldehydes, via a retro-aldol mechanism. This chain is Serine hydroxymethyltransferase, found in Oenococcus oeni (strain ATCC BAA-331 / PSU-1).